We begin with the raw amino-acid sequence, 68 residues long: Conotoxin TsMMSK-021 (68 aa).

A signal peptide spans 1-20 (MMSKLGVLLTICLLLFPLTA). Positions 21 to 52 (VRLDGDQHTDRPADRMQDIATEQHPLFDPVKR) are excised as a propeptide. 3 disulfides stabilise this stretch: C53–C66, C54–C62, and C58–C65. P64 carries the post-translational modification 4-hydroxyproline.

This sequence belongs to the conotoxin M superfamily. In terms of tissue distribution, expressed by the venom duct.

The protein resides in the secreted. The chain is Conotoxin TsMMSK-021 from Conus tessulatus (Tessellate cone).